Here is a 569-residue protein sequence, read N- to C-terminus: Aspartokinase 1, chloroplastic (569 aa).

A chloroplast-targeting transit peptide spans 1 to 90 (MAATRVRCCH…VDEKGITCVM (90 aa)). The ATP site is built by K91, G94, and S123. E207 contributes to the substrate binding site. ACT domains follow at residues 405 to 483 (IAST…AIIS) and 484 to 560 (LIGN…GNGS). 2 residues coordinate L-lysine: Q413 and G415. Residue S430 participates in S-adenosyl-L-methionine binding. L-lysine is bound by residues V431, D432, and S437. 2 residues coordinate S-adenosyl-L-methionine: S452 and R453.

This sequence belongs to the aspartokinase family. In terms of assembly, homodimer.

The protein resides in the plastid. It localises to the chloroplast. It catalyses the reaction L-aspartate + ATP = 4-phospho-L-aspartate + ADP. It participates in amino-acid biosynthesis; L-lysine biosynthesis via DAP pathway; (S)-tetrahydrodipicolinate from L-aspartate: step 1/4. Its pathway is amino-acid biosynthesis; L-methionine biosynthesis via de novo pathway; L-homoserine from L-aspartate: step 1/3. It functions in the pathway amino-acid biosynthesis; L-threonine biosynthesis; L-threonine from L-aspartate: step 1/5. Its activity is regulated as follows. Inhibited by S-adenosyl-L-methionine (SAM) and lysine in a synergistic manner. No inhibition by threonine, leucine or SAM alone, and no activation or inhibition by alanine, cysteine, isoleucine, serine, valine, methionine, glutamine, asparagine, glutamic acid or arginine. In terms of biological role, involved in the first step of essential amino acids lysine, threonine, methionine and isoleucine synthesis via the aspartate-family pathway. This chain is Aspartokinase 1, chloroplastic (AK1), found in Arabidopsis thaliana (Mouse-ear cress).